The sequence spans 495 residues: UDP-N-acetylmuramoyl-L-alanyl-D-glutamate--2,6-diaminopimelate ligase (495 aa).

Positions 32 and 34 each coordinate UDP-N-acetyl-alpha-D-muramoyl-L-alanyl-D-glutamate. 119–125 (GTNGKTT) provides a ligand contact to ATP. UDP-N-acetyl-alpha-D-muramoyl-L-alanyl-D-glutamate-binding positions include Asn160, 161 to 162 (TT), Ser188, Gln194, and Arg196. The residue at position 228 (Lys228) is an N6-carboxylysine. Meso-2,6-diaminopimelate is bound by residues Arg390, 414 to 417 (DNPR), Gly465, and Glu469. Residues 414-417 (DNPR) carry the Meso-diaminopimelate recognition motif motif.

Belongs to the MurCDEF family. MurE subfamily. Requires Mg(2+) as cofactor. Post-translationally, carboxylation is probably crucial for Mg(2+) binding and, consequently, for the gamma-phosphate positioning of ATP.

It localises to the cytoplasm. The enzyme catalyses UDP-N-acetyl-alpha-D-muramoyl-L-alanyl-D-glutamate + meso-2,6-diaminopimelate + ATP = UDP-N-acetyl-alpha-D-muramoyl-L-alanyl-gamma-D-glutamyl-meso-2,6-diaminopimelate + ADP + phosphate + H(+). It participates in cell wall biogenesis; peptidoglycan biosynthesis. Functionally, catalyzes the addition of meso-diaminopimelic acid to the nucleotide precursor UDP-N-acetylmuramoyl-L-alanyl-D-glutamate (UMAG) in the biosynthesis of bacterial cell-wall peptidoglycan. The protein is UDP-N-acetylmuramoyl-L-alanyl-D-glutamate--2,6-diaminopimelate ligase of Vibrio cholerae serotype O1 (strain ATCC 39315 / El Tor Inaba N16961).